The chain runs to 403 residues: Cytoplasmic tRNA 2-thiolation protein 2 (403 aa).

The protein belongs to the CTU2/NCS2 family.

The protein resides in the cytoplasm. It functions in the pathway tRNA modification; 5-methoxycarbonylmethyl-2-thiouridine-tRNA biosynthesis. In terms of biological role, plays a central role in 2-thiolation of mcm(5)S(2)U at tRNA wobble positions of tRNA(Lys), tRNA(Glu) and tRNA(Gln). May act by forming a heterodimer with NCS6/CTU1 that ligates sulfur from thiocarboxylated URM1 onto the uridine of tRNAs at wobble position. The sequence is that of Cytoplasmic tRNA 2-thiolation protein 2 from Drosophila willistoni (Fruit fly).